The primary structure comprises 372 residues: Serine/threonine-protein kinase 17B (372 aa).

One can recognise a Protein kinase domain in the interval 33–293 (TLTPKELGRG…AESCLSHSWL (261 aa)). ATP contacts are provided by residues 39-47 (LGRGKFAVV) and lysine 62. Aspartate 158 serves as the catalytic Proton acceptor. Residues 305–348 (EETSGSSQIQDLTLRSSEEKTSKSSCNGSCGAREDKENIPEDGS) are disordered. Residues 307-319 (TSGSSQIQDLTLR) are compositionally biased toward polar residues.

The protein belongs to the protein kinase superfamily. CAMK Ser/Thr protein kinase family. DAP kinase subfamily. In terms of assembly, interacts with CHP1; the interaction induces CHP1 to translocate from the Golgi to the nucleus. Post-translationally, autophosphorylated.

It localises to the nucleus. The protein localises to the cell membrane. The protein resides in the endoplasmic reticulum-Golgi intermediate compartment. The enzyme catalyses L-seryl-[protein] + ATP = O-phospho-L-seryl-[protein] + ADP + H(+). It catalyses the reaction L-threonyl-[protein] + ATP = O-phospho-L-threonyl-[protein] + ADP + H(+). In terms of biological role, acts as a positive regulator of apoptosis. Phosphorylates myosin light chains. The chain is Serine/threonine-protein kinase 17B (Stk17b) from Mus musculus (Mouse).